The sequence spans 554 residues: Formate--tetrahydrofolate ligase (554 aa).

An ATP-binding site is contributed by 67–74 (TPTGEGKT).

The protein belongs to the formate--tetrahydrofolate ligase family.

It carries out the reaction (6S)-5,6,7,8-tetrahydrofolate + formate + ATP = (6R)-10-formyltetrahydrofolate + ADP + phosphate. Its pathway is one-carbon metabolism; tetrahydrofolate interconversion. The polypeptide is Formate--tetrahydrofolate ligase (Finegoldia magna (strain ATCC 29328 / DSM 20472 / WAL 2508) (Peptostreptococcus magnus)).